Consider the following 558-residue polypeptide: Glucose-6-phosphate isomerase (558 aa).

Ala2 bears the N-acetylalanine mark. N6-acetyllysine is present on Lys12. Phosphoserine occurs at positions 86 and 107. Lys142 carries the N6-acetyllysine modification. Gly159–Ser160 provides a ligand contact to D-glucose 6-phosphate. Residue Ser185 is modified to Phosphoserine; by CK2. A D-glucose 6-phosphate-binding site is contributed by Ser210–Thr215. Position 250 is a phosphothreonine (Thr250). Gln354, Glu358, and His389 together coordinate D-glucose 6-phosphate. The Proton donor role is filled by Glu358. His389 is an active-site residue. The residue at position 454 (Lys454) is an N6-acetyllysine; alternate. Lys454 is modified (N6-malonyllysine; alternate). Lys454 is modified (N6-succinyllysine; alternate). At Ser455 the chain carries Phosphoserine. Lys519 contributes to the D-glucose 6-phosphate binding site. The active site involves Lys519.

It belongs to the GPI family. As to quaternary structure, homodimer; in the catalytically active form. Monomer in the secreted form. In terms of processing, phosphorylation at Ser-185 by CK2 has been shown to decrease enzymatic activity and may contribute to secretion by a non-classical secretory pathway. Post-translationally, ISGylated.

Its subcellular location is the cytoplasm. It is found in the secreted. It carries out the reaction alpha-D-glucose 6-phosphate = beta-D-fructose 6-phosphate. It functions in the pathway carbohydrate degradation; glycolysis; D-glyceraldehyde 3-phosphate and glycerone phosphate from D-glucose: step 2/4. In terms of biological role, in the cytoplasm, catalyzes the conversion of glucose-6-phosphate to fructose-6-phosphate, the second step in glycolysis, and the reverse reaction during gluconeogenesis. Besides it's role as a glycolytic enzyme, also acts as a secreted cytokine: acts as an angiogenic factor (AMF) that stimulates endothelial cell motility. Acts as a neurotrophic factor, neuroleukin, for spinal and sensory neurons. It is secreted by lectin-stimulated T-cells and induces immunoglobulin secretion. This is Glucose-6-phosphate isomerase from Rattus norvegicus (Rat).